Consider the following 312-residue polypeptide: Ribosomal protein L11 methyltransferase (312 aa).

Positions 162, 183, 205, and 248 each coordinate S-adenosyl-L-methionine.

Belongs to the methyltransferase superfamily. PrmA family.

The protein localises to the cytoplasm. The catalysed reaction is L-lysyl-[protein] + 3 S-adenosyl-L-methionine = N(6),N(6),N(6)-trimethyl-L-lysyl-[protein] + 3 S-adenosyl-L-homocysteine + 3 H(+). In terms of biological role, methylates ribosomal protein L11. In Bacillus cereus (strain Q1), this protein is Ribosomal protein L11 methyltransferase.